Reading from the N-terminus, the 195-residue chain is MTRKKDETPAEKVEARLESFYREKVVPVMMERFQYSNVMMVPKLEKISINIGVGEAAAEPKLLETAMLELGQITGQKPQVRKSRKAISNFKLRENQAIGCRVTLRRKKMYEFLDRFVSLAVPRIRDFRGLSNTSFDGRGNYTAGIREQIIFPEIDIDKVPRICGMDISFVTSAATDEEAYVLLAELGMPFKKKNN.

The protein belongs to the universal ribosomal protein uL5 family. Part of the 50S ribosomal subunit; part of the 5S rRNA/L5/L18/L25 subcomplex. Contacts the 5S rRNA and the P site tRNA. Forms a bridge to the 30S subunit in the 70S ribosome.

In terms of biological role, this is one of the proteins that bind and probably mediate the attachment of the 5S RNA into the large ribosomal subunit, where it forms part of the central protuberance. In the 70S ribosome it contacts protein S13 of the 30S subunit (bridge B1b), connecting the 2 subunits; this bridge is implicated in subunit movement. Contacts the P site tRNA; the 5S rRNA and some of its associated proteins might help stabilize positioning of ribosome-bound tRNAs. This is Large ribosomal subunit protein uL5 from Chlorobium phaeobacteroides (strain DSM 266 / SMG 266 / 2430).